A 924-amino-acid polypeptide reads, in one-letter code: Protein SMAX1-LIKE 2 (924 aa).

A Clp R domain is found at 8–181 (IQQTLTPEAA…SAIEQSLIGN (174 aa)). The tract at residues 12 to 83 (LTPEAATVLN…LCFSVALERL (72 aa)) is repeat 1. Positions 86-105 (TSTTTTTTSSSSSSSPSQTQ) are enriched in low complexity. The tract at residues 86–107 (TSTTTTTTSSSSSSSPSQTQEP) is disordered. Positions 109–181 (LSNALTAALK…SAIEQSLIGN (73 aa)) are repeat 2. The interval 522 to 552 (TRSDITPPGSPVGTDLVLGRPNRGLSSPEKK) is disordered. The EAR motif lies at 780–784 (FDLNE).

It belongs to the ClpA/ClpB family. As to quaternary structure, interacts probably with TPL/TPR in an EAR-motif dependent manner. As to expression, expressed in seedlings and leaves. Detected in roots and axillary branches.

Functionally, probable component of a transcriptional corepressor complex that acts specifically in the karrikin pathway. Controls seedling growth redundantly with SMAX1, but is not involved in leaf morphology, shoot branching or germination control. The chain is Protein SMAX1-LIKE 2 from Arabidopsis thaliana (Mouse-ear cress).